Reading from the N-terminus, the 242-residue chain is Sensory transduction protein LytT (242 aa).

The 115-residue stretch at 2–116 (HVLIVDDEPL…KITQVIEKAS (115 aa)) folds into the Response regulatory domain. The HTH LytTR-type domain maps to 137–241 (IPIQGEDRIY…VKEFKEKLGL (105 aa)).

Post-translationally, phosphorylated by LytS.

It is found in the cytoplasm. In terms of biological role, member of the two-component regulatory system LytS/LytT that probably regulates genes involved in cell wall metabolism. The sequence is that of Sensory transduction protein LytT (lytT) from Enterococcus faecalis (strain ATCC 700802 / V583).